Consider the following 310-residue polypeptide: Metal ABC transporter substrate-binding lipoprotein ScbA (310 aa).

Positions 1-19 (MKKCRFLVLLLLAFVGLAA) are cleaved as a signal peptide. Residue Cys20 is the site of N-palmitoyl cysteine attachment. The S-diacylglycerol cysteine moiety is linked to residue Cys20. The a divalent metal cation site is built by His68, His140, Glu206, and Asp281.

The protein belongs to the bacterial solute-binding protein 9 family.

It localises to the cell membrane. Its function is as follows. Part of an ATP-binding cassette (ABC) transport system involved in metal import. Binds a metal with high affinity and specificity and delivers it to the membrane permease for translocation into the cytoplasm. Part of an ATP-driven transport system for manganese. Does not exhibit adhesion properties. This is Metal ABC transporter substrate-binding lipoprotein ScbA (scbA) from Streptococcus cristatus.